We begin with the raw amino-acid sequence, 760 residues long: MGSFLRSFRNNAGSTTPSVGAVPAKKEVPIPPMTPLEKRLLDMGSIRGDGSDKFYGMENYGNTCYCNSILQCLYYSVPFREAVINYPTRTPIESLEAALAKSLRYPNPNAHLEAEAQAEKQRAANAQRPGMPPAQPQKPEDKDSPDYKKKMALQTLPLLEAQNNATSYGMSESLFTSLKDIFESVVGSQSRIGIVRPQQFLDVLRRDHEMFRTAMHQDAHEFLNLLLNEVVANVEAEASKQPAAIEKSLPAPDHAETVDQSASSGSKTPNTTRWVHELFEGTLTSETQCLTCEKVSQRDEIFLDLSVDLEQHSSVTSCLRKFSAEEMLCERNKFHCDNCGGLQEAEKRMKIKRLPRILALHLKRFKYTEDLQRLQKLFHRVVYPYHLRLFNTTDDAEDPDRLYELYAVVVHIGGGPYHGHYVAIIKTEDRGWLLFDDELVEPVDKNYVRNFFGDKPGLACAYVLFYQETTLEAVMKEQEQENMESNLSATDTNEAALKPNGSSPSHLAHVHSASYIPSLEEHNRPNGLKRAPTAPQLSTHHEHGDPESGAFSPVTATPPVPPIPEHLSAAPIPPKSDVQGKKERAREEKERKAAEKEREKAEKLRRKEQEARAKENQRREEAELKAALEASKASKAQEDRRQSPDHGKDKLGGGLSRLKRGSKSFSQRLGKDKETRSVSSLEAPPLPIPGHPISRDGPIPEQHQQQPDPKDDPFQDSHHPNKPMMKEDEQANHKDPKHERTGHGKWRSFSLRKKSFSILS.

The disordered stretch occupies residues 1-28 (MGSFLRSFRNNAGSTTPSVGAVPAKKEV). Over residues 8–18 (FRNNAGSTTPS) the composition is skewed to polar residues. Residues 55-469 (YGMENYGNTC…CAYVLFYQET (415 aa)) form the USP domain. Cysteine 64 functions as the Nucleophile in the catalytic mechanism. Disordered stretches follow at residues 114–146 (AEAQAEKQRAANAQRPGMPPAQPQKPEDKDSPD) and 242–270 (PAAIEKSLPAPDHAETVDQSASSGSKTPN). A compositionally biased stretch (polar residues) spans 258 to 270 (VDQSASSGSKTPN). Histidine 420 (proton acceptor) is an active-site residue. Positions 520–760 (EEHNRPNGLK…LRKKSFSILS (241 aa)) are disordered. A coiled-coil region spans residues 575 to 635 (KSDVQGKKER…AALEASKASK (61 aa)). Basic and acidic residues-rich tracts occupy residues 578–626 (VQGK…ELKA), 635–651 (KAQEDRRQSPDHGKDKL), and 708–742 (DPKDDPFQDSHHPNKPMMKEDEQANHKDPKHERTG). The segment covering 743-760 (HGKWRSFSLRKKSFSILS) has biased composition (basic residues).

It belongs to the peptidase C19 family. As to quaternary structure, interacts with creA, creC and qutD.

It carries out the reaction Thiol-dependent hydrolysis of ester, thioester, amide, peptide and isopeptide bonds formed by the C-terminal Gly of ubiquitin (a 76-residue protein attached to proteins as an intracellular targeting signal).. Its function is as follows. Ubiquitin thioesterase component of the regulatory network controlling carbon source utilization through ubiquitination and deubiquitination involving creA, creB, creC, creD and acrB. Deubiquitinates the creA catabolic repressor and the quinate permease qutD. Also plays a role in response to carbon starvation and the control of extracellular proteases activity. This Aspergillus clavatus (strain ATCC 1007 / CBS 513.65 / DSM 816 / NCTC 3887 / NRRL 1 / QM 1276 / 107) protein is Probable ubiquitin carboxyl-terminal hydrolase creB (creB).